We begin with the raw amino-acid sequence, 529 residues long: Bifunctional purine biosynthesis protein PurH (529 aa).

In terms of domain architecture, MGS-like spans 1 to 146; the sequence is MAPTALLSVS…KNHAHVAVLT (146 aa).

Belongs to the PurH family.

It catalyses the reaction (6R)-10-formyltetrahydrofolate + 5-amino-1-(5-phospho-beta-D-ribosyl)imidazole-4-carboxamide = 5-formamido-1-(5-phospho-D-ribosyl)imidazole-4-carboxamide + (6S)-5,6,7,8-tetrahydrofolate. It carries out the reaction IMP + H2O = 5-formamido-1-(5-phospho-D-ribosyl)imidazole-4-carboxamide. The protein operates within purine metabolism; IMP biosynthesis via de novo pathway; 5-formamido-1-(5-phospho-D-ribosyl)imidazole-4-carboxamide from 5-amino-1-(5-phospho-D-ribosyl)imidazole-4-carboxamide (10-formyl THF route): step 1/1. Its pathway is purine metabolism; IMP biosynthesis via de novo pathway; IMP from 5-formamido-1-(5-phospho-D-ribosyl)imidazole-4-carboxamide: step 1/1. The polypeptide is Bifunctional purine biosynthesis protein PurH (Synechococcus sp. (strain CC9311)).